A 268-amino-acid polypeptide reads, in one-letter code: MNRYQALFQRLSAAQQGAFVPFVTIGDPNPEQSLAIMQTLIDAGADALELGMPFSDPLADGPTIQGANLRALAAKTTPDICFELIAQIRARNPETPIGLLMYANLVYARGIDDFYQRCQKAGVDSVLIADVPTNESQPFVAAAEKFGIQPIFIAPPTASDETLRAVAQLGKGYTYLLSRAGVTGAETKANMPVHALLERLQQFDAPPALLGFGISEPAQVKQAIEAGAAGAISGSAVVKIIETHLDNPAKQLTELANFTQAMKKATKI.

Catalysis depends on proton acceptor residues Glu-49 and Asp-60.

Belongs to the TrpA family. As to quaternary structure, tetramer of two alpha and two beta chains.

The enzyme catalyses (1S,2R)-1-C-(indol-3-yl)glycerol 3-phosphate + L-serine = D-glyceraldehyde 3-phosphate + L-tryptophan + H2O. It functions in the pathway amino-acid biosynthesis; L-tryptophan biosynthesis; L-tryptophan from chorismate: step 5/5. Its function is as follows. The alpha subunit is responsible for the aldol cleavage of indoleglycerol phosphate to indole and glyceraldehyde 3-phosphate. The protein is Tryptophan synthase alpha chain of Vibrio cholerae serotype O1 (strain ATCC 39541 / Classical Ogawa 395 / O395).